Consider the following 126-residue polypeptide: Holo-[acyl-carrier-protein] synthase (126 aa).

The Mg(2+) site is built by Asp9 and Glu58.

Belongs to the P-Pant transferase superfamily. AcpS family. It depends on Mg(2+) as a cofactor.

It localises to the cytoplasm. The enzyme catalyses apo-[ACP] + CoA = holo-[ACP] + adenosine 3',5'-bisphosphate + H(+). Transfers the 4'-phosphopantetheine moiety from coenzyme A to a Ser of acyl-carrier-protein. This Sodalis glossinidius (strain morsitans) protein is Holo-[acyl-carrier-protein] synthase.